We begin with the raw amino-acid sequence, 234 residues long: Response regulator RppA (234 aa).

Residues 2 to 118 (RILLVEDETD…ELLARLRALQ (117 aa)) enclose the Response regulatory domain. The residue at position 53 (Asp53) is a 4-aspartylphosphate. The segment at residues 126 to 232 (PQILTLGNFS…VPGQGYRFTL (107 aa)) is a DNA-binding region (ompR/PhoB-type).

Interacts with histidine kinase Hik2; may accept phosphate from Hik2.

Its function is as follows. Member of two-component regulatory system RppA/RppB, involved in the establishment of the appropriate stoichiometry between the 2 photosystems. It senses changes in the plastoquinone (PQ) redox poise. Another group shows this two-component pair, renamed NrsR/NrsS, controls the nickel-dependent expression of the nrsBACD operon; they suggest the photosystem-related activities seen earlier are due to the expression of NrsS (RppB) in the absence of its natural substrate NrsR (RppA). May accept phosphate from Hik2 in a possible Hik2/RppA two-component system. This is Response regulator RppA from Synechocystis sp. (strain ATCC 27184 / PCC 6803 / Kazusa).